The primary structure comprises 695 residues: Elongation factor G 2 (695 aa).

The tr-type G domain maps to 5-280 (SKYRNIGIFA…AVVDYLPSPT (276 aa)). GTP contacts are provided by residues 14 to 21 (AHVDAGKT), 78 to 82 (DTPGH), and 132 to 135 (NKLD).

Belongs to the TRAFAC class translation factor GTPase superfamily. Classic translation factor GTPase family. EF-G/EF-2 subfamily.

It is found in the cytoplasm. Catalyzes the GTP-dependent ribosomal translocation step during translation elongation. During this step, the ribosome changes from the pre-translocational (PRE) to the post-translocational (POST) state as the newly formed A-site-bound peptidyl-tRNA and P-site-bound deacylated tRNA move to the P and E sites, respectively. Catalyzes the coordinated movement of the two tRNA molecules, the mRNA and conformational changes in the ribosome. This chain is Elongation factor G 2, found in Photobacterium profundum (strain SS9).